Reading from the N-terminus, the 512-residue chain is Zinc finger CCCH-type with G patch domain-containing protein (512 aa).

The C3H1-type zinc finger occupies 159–186 (QEMVPCAYFLEGDCKFNDEMCRFSHGEL). Residues 255–280 (LEGDDVPSSDSESNSDSDEENEDDVV) are disordered. A compositionally biased stretch (acidic residues) spans 256 to 279 (EGDDVPSSDSESNSDSDEENEDDV). The G-patch domain occupies 308–354 (TKGIGSKIMLKMGYVVGAGLGSKGEGIVVPVSAQVLPQGRSLDYCMQ). Residues 407–417 (SSNGSSSSSGS) are compositionally biased toward low complexity. The interval 407-432 (SSNGSSSSSGSKKPAAKDNQMDLPSC) is disordered.

Its subcellular location is the nucleus. Functionally, transcription repressor. In Aedes aegypti (Yellowfever mosquito), this protein is Zinc finger CCCH-type with G patch domain-containing protein.